The following is a 220-amino-acid chain: Early protein OPG038 (220 aa).

The signal sequence occupies residues 1–17 (MVYKLVLLFCIASLGYS).

It belongs to the orthopoxvirus OPG038 family. As to quaternary structure, homooligomer. Interacts with host CD80 and CD86 when secreted. Post-translationally, glycosylated by host.

It localises to the host endoplasmic reticulum. Its subcellular location is the secreted. Its function is as follows. Plays a role in immune evasion. When secreted, inhibits T-cell activation by preventing the binding of host CD80 and CD86 to soluble CTLA4 and CD28. In the infected cell, may inhibits host NF kappa B activation. The chain is Early protein OPG038 (OPG038) from Homo sapiens (Human).